The sequence spans 376 residues: Cyclic GMP-AMP synthase-like receptor 1 (376 aa).

The Mg(2+) site is built by Glu77 and Asp79.

The protein belongs to the mab-21 family. It depends on Mg(2+) as a cofactor. Mn(2+) serves as cofactor.

It catalyses the reaction UTP + ATP = 3',3'-cUAMP + 2 diphosphate. Nucleotidyltransferase that catalyzes the formation of cyclic UMP-AMP (3',3'-cUAMP) from ATP and UTP and plays a key role in innate immunity. Acts as a key sensor of double-stranded RNA (dsRNA), the presence of dsRNA in the cytoplasm being a danger signal that triggers the immune responses. Directly binds dsRNA, activating the nucleotidyltransferase activity, leading to synthesis of 3',3'-cUAMP, a second messenger that binds to and activates Sting, thereby triggering the immune response via activation of the NF-kappa-B transcription factor. The protein is Cyclic GMP-AMP synthase-like receptor 1 of Stylophora pistillata (Smooth cauliflower coral).